Here is a 1413-residue protein sequence, read N- to C-terminus: DNA-directed RNA polymerase subunit beta' (1413 aa).

The Zn(2+) site is built by Cys70, Cys72, Cys85, and Cys88. Residues Asp460, Asp462, and Asp464 each contribute to the Mg(2+) site. Cys819, Cys893, Cys900, and Cys903 together coordinate Zn(2+). Residues 1392–1413 (EEAFDFGTPSAPAEEPQHPAAE) are disordered.

This sequence belongs to the RNA polymerase beta' chain family. In terms of assembly, the RNAP catalytic core consists of 2 alpha, 1 beta, 1 beta' and 1 omega subunit. When a sigma factor is associated with the core the holoenzyme is formed, which can initiate transcription. Mg(2+) is required as a cofactor. The cofactor is Zn(2+).

The enzyme catalyses RNA(n) + a ribonucleoside 5'-triphosphate = RNA(n+1) + diphosphate. DNA-dependent RNA polymerase catalyzes the transcription of DNA into RNA using the four ribonucleoside triphosphates as substrates. This Burkholderia orbicola (strain MC0-3) protein is DNA-directed RNA polymerase subunit beta'.